The following is a 547-amino-acid chain: Sodium-coupled neutral amino acid transporter 4 (547 aa).

Residues Met-1–Ile-30 are disordered. Residues Met-1–Gly-104 are Extracellular-facing. Position 49 is a phosphoserine (Ser-49). A helical transmembrane segment spans residues Ile-105–Leu-125. Residues Leu-126 to Lys-151 are Cytoplasmic-facing. A helical membrane pass occupies residues Ile-152–Ile-172. The Extracellular segment spans residues Ile-173 to Tyr-195. The helical transmembrane segment at Leu-196–Leu-216 threads the bilayer. The Cytoplasmic portion of the chain corresponds to Lys-217–Gly-220. The chain crosses the membrane as a helical span at residues Tyr-221–Ile-241. At Tyr-242–Thr-332 the chain is on the extracellular side. A disulfide bridge links Cys-249 with Cys-321. Residues Asn-260, Asn-264, and Asn-276 are each glycosylated (N-linked (GlcNAc...) asparagine). A helical membrane pass occupies residues Ala-333–Tyr-353. Residues Ser-354–Asn-369 are Cytoplasmic-facing. The chain crosses the membrane as a helical span at residues Ile-370–Phe-390. Over Tyr-391 to Pro-411 the chain is Extracellular. A helical membrane pass occupies residues Leu-412–Phe-432. At Pro-433–His-453 the chain is on the cytoplasmic side. Residues Phe-454–Ile-474 traverse the membrane as a helical segment. Residues Lys-475 to Tyr-476 are Extracellular-facing. Residues Ile-477 to Phe-497 form a helical membrane-spanning segment. The Cytoplasmic segment spans residues Tyr-498 to Gly-514. The chain crosses the membrane as a helical span at residues Ala-515–Ile-535. Topologically, residues Asp-536–His-547 are extracellular.

This sequence belongs to the amino acid/polyamine transporter 2 family. In terms of processing, the disulfide bond plays an important role in substrate transport, but has no effect on trafficking to the cell surface. Expressed almost exclusively in embryonic and adult liver, and at lower levels in the kidney. Expressed at lower levels in adult muscle and pancreas. Detected in fetal blood vessels. Expressed in syncytiotrophoblas of placenta during first trimester and at term. Highly expressed in first trimester placenta compared to term placenta.

It is found in the cell membrane. The protein resides in the cell projection. It localises to the microvillus membrane. The catalysed reaction is L-methionine(in) + Na(+)(in) = L-methionine(out) + Na(+)(out). The enzyme catalyses L-asparagine(in) + Na(+)(in) = L-asparagine(out) + Na(+)(out). It carries out the reaction L-threonine(in) + Na(+)(in) = L-threonine(out) + Na(+)(out). It catalyses the reaction L-serine(in) + Na(+)(in) = L-serine(out) + Na(+)(out). The catalysed reaction is glycine(in) + Na(+)(in) = glycine(out) + Na(+)(out). The enzyme catalyses L-alanine(in) + Na(+)(in) = L-alanine(out) + Na(+)(out). It carries out the reaction L-glutamine(in) + Na(+)(in) = L-glutamine(out) + Na(+)(out). It catalyses the reaction L-histidine(in) + Na(+)(in) = L-histidine(out) + Na(+)(out). The catalysed reaction is L-cysteine(in) + Na(+)(in) = L-cysteine(out) + Na(+)(out). The enzyme catalyses L-proline(in) + Na(+)(in) = L-proline(out) + Na(+)(out). Functionally, symporter that cotransports neutral amino acids and sodium ions from the extraccellular to the intracellular side of the cell membrane. The transport is electrogenic, pH dependent and partially tolerates substitution of Na(+) by Li(+). Preferentially transports smaller amino acids, such as glycine, L-alanine, L-serine, L-asparagine and L-threonine, followed by L-cysteine, L-histidine, L-proline and L-glutamine and L-methionine. This Homo sapiens (Human) protein is Sodium-coupled neutral amino acid transporter 4.